Here is a 335-residue protein sequence, read N- to C-terminus: Mevalonate kinase (335 aa).

Position 111–121 (111–121) interacts with ATP; the sequence is PVGAGLGSSAA. Asp162 acts as the Proton acceptor in catalysis.

This sequence belongs to the GHMP kinase family. Mevalonate kinase subfamily. In terms of assembly, homodimer. The cofactor is Mg(2+).

The protein resides in the cytoplasm. It catalyses the reaction (R)-mevalonate + ATP = (R)-5-phosphomevalonate + ADP + H(+). It functions in the pathway isoprenoid biosynthesis; isopentenyl diphosphate biosynthesis via mevalonate pathway; isopentenyl diphosphate from (R)-mevalonate: step 1/3. Functionally, catalyzes the phosphorylation of (R)-mevalonate (MVA) to (R)-mevalonate 5-phosphate (MVAP). Functions in the mevalonate (MVA) pathway leading to isopentenyl diphosphate (IPP), a key precursor for the biosynthesis of isoprenoid compounds such as archaeal membrane lipids. This is Mevalonate kinase from Pyrococcus horikoshii (strain ATCC 700860 / DSM 12428 / JCM 9974 / NBRC 100139 / OT-3).